A 362-amino-acid polypeptide reads, in one-letter code: MTRLTRPMVRSPISLPSTPSQLLHSASLSSSPSSPSLVQQSHSYHGDYFSIKPKLSLDFAHSSDNFSDESELENNSTSFVDDDDIVKVRETFDNISIDIGASNPFAKNKHQWSYSPITPYDIVDENHTITVSTPKTNSQLLYTTTSPQLPRKETLSLKFGPSTLKSTVSTSTSTSTSTSTGTNTETKTVTTAAKSTNFTLSMPNLQQHKFLLVDDNLINLKILNRILLKLYPKAQITQVLDSTKVAKLVEENEYDAVFIDIEMPVVNGVQIAQFIRSDVSKDDLTVIAVTTRNSKEDLALFEKTGIDYTFGKPLNYKLDFMANVIDEIIERRKGQMIKKSVSSVESGVSLCSKESTNTLLIA.

2 disordered regions span residues 1-39 (MTRL…SLVQ) and 163-188 (TLKS…ETKT). A compositionally biased stretch (low complexity) spans 19–39 (PSQLLHSASLSSSPSSPSLVQ). Positions 209 to 327 (KFLLVDDNLI…LDFMANVIDE (119 aa)) constitute a Response regulatory domain. Aspartate 260 is subject to 4-aspartylphosphate.

Its function is as follows. Required for stress adaptation, morphogenesis and virulence. This chain is Stress response regulator protein 1 (SRR1), found in Lodderomyces elongisporus (strain ATCC 11503 / CBS 2605 / JCM 1781 / NBRC 1676 / NRRL YB-4239) (Yeast).